A 652-amino-acid chain; its full sequence is Phosphomethylpyrimidine synthase (652 aa).

Substrate contacts are provided by residues Asn-257, Met-286, Tyr-315, His-351, Ser-371–Gly-373, Asp-412–Arg-415, and Glu-451. Zn(2+) is bound at residue His-455. Tyr-478 lines the substrate pocket. His-519 contacts Zn(2+). [4Fe-4S] cluster is bound by residues Cys-599, Cys-602, and Cys-607.

Belongs to the ThiC family. In terms of assembly, homodimer. Requires [4Fe-4S] cluster as cofactor.

The enzyme catalyses 5-amino-1-(5-phospho-beta-D-ribosyl)imidazole + S-adenosyl-L-methionine = 4-amino-2-methyl-5-(phosphooxymethyl)pyrimidine + CO + 5'-deoxyadenosine + formate + L-methionine + 3 H(+). It participates in cofactor biosynthesis; thiamine diphosphate biosynthesis. Its function is as follows. Catalyzes the synthesis of the hydroxymethylpyrimidine phosphate (HMP-P) moiety of thiamine from aminoimidazole ribotide (AIR) in a radical S-adenosyl-L-methionine (SAM)-dependent reaction. This chain is Phosphomethylpyrimidine synthase, found in Thiobacillus denitrificans (strain ATCC 25259 / T1).